We begin with the raw amino-acid sequence, 400 residues long: 3-phenylpropionate/cinnamic acid dioxygenase ferredoxin--NAD(+) reductase component (400 aa).

5 to 36 is an FAD binding site; the sequence is TIIIVGGGQAAAMAAASLRQQGFTGELHLFSD. An NAD(+)-binding site is contributed by 146-174; that stretch reads SVVIVGAGTIGLELAASATQRGCKVTVIE.

This sequence belongs to the bacterial ring-hydroxylating dioxygenase ferredoxin reductase family. In terms of assembly, this dioxygenase system consists of four proteins: the two subunits of the hydroxylase component (HcaE and HcaF), a ferredoxin (HcaC) and a ferredoxin reductase (HcaD). The cofactor is FAD.

The enzyme catalyses 2 reduced [2Fe-2S]-[ferredoxin] + NAD(+) + H(+) = 2 oxidized [2Fe-2S]-[ferredoxin] + NADH. It participates in aromatic compound metabolism; 3-phenylpropanoate degradation. Part of the multicomponent 3-phenylpropionate dioxygenase, that converts 3-phenylpropionic acid (PP) and cinnamic acid (CI) into 3-phenylpropionate-dihydrodiol (PP-dihydrodiol) and cinnamic acid-dihydrodiol (CI-dihydrodiol), respectively. In Escherichia coli (strain SMS-3-5 / SECEC), this protein is 3-phenylpropionate/cinnamic acid dioxygenase ferredoxin--NAD(+) reductase component.